The primary structure comprises 252 residues: Phosphonates import ATP-binding protein PhnC 1 (252 aa).

Positions 2-244 (ISLNKLGVTY…QLEEIYQTLS (243 aa)) constitute an ABC transporter domain. 35–42 (GSSGAGKS) contributes to the ATP binding site.

Belongs to the ABC transporter superfamily. Phosphonates importer (TC 3.A.1.9.1) family. As to quaternary structure, the complex is composed of two ATP-binding proteins (PhnC), two transmembrane proteins (PhnE) and a solute-binding protein (PhnD).

The protein localises to the cell inner membrane. It catalyses the reaction phosphonate(out) + ATP + H2O = phosphonate(in) + ADP + phosphate + H(+). Its function is as follows. Part of the ABC transporter complex PhnCDE involved in phosphonates import. Responsible for energy coupling to the transport system. The protein is Phosphonates import ATP-binding protein PhnC 1 of Trichodesmium erythraeum (strain IMS101).